Here is a 492-residue protein sequence, read N- to C-terminus: Cell division protein FtsA (492 aa).

2 disordered regions span residues 288-307 (GEETPSQNVQIPTTGSDGHE) and 429-458 (YTRTAHQSSPTPHIHSSPTERNLSDLKAPS). Residues 291-303 (TPSQNVQIPTTGS) show a composition bias toward polar residues. Low complexity predominate over residues 436-447 (SSPTPHIHSSPT).

It belongs to the FtsA/MreB family. Self-interacts. Interacts with FtsZ.

The protein localises to the cell inner membrane. Its function is as follows. Cell division protein that is involved in the assembly of the Z ring. May serve as a membrane anchor for the Z ring. In Helicobacter pylori (strain ATCC 700392 / 26695) (Campylobacter pylori), this protein is Cell division protein FtsA.